The sequence spans 232 residues: Large ribosomal subunit protein uL1 (232 aa).

The protein belongs to the universal ribosomal protein uL1 family. As to quaternary structure, part of the 50S ribosomal subunit.

Functionally, binds directly to 23S rRNA. The L1 stalk is quite mobile in the ribosome, and is involved in E site tRNA release. Its function is as follows. Protein L1 is also a translational repressor protein, it controls the translation of the L11 operon by binding to its mRNA. The polypeptide is Large ribosomal subunit protein uL1 (Marinobacter nauticus (strain ATCC 700491 / DSM 11845 / VT8) (Marinobacter aquaeolei)).